Reading from the N-terminus, the 230-residue chain is Interleukin-6 (230 aa).

A signal peptide spans 1–24; that stretch reads MASKHNADLSSAAMLAALLLCALG. Cys-96 and Cys-106 form a disulfide bridge. Asn-100 is a glycosylation site (N-linked (GlcNAc...) asparagine). Over residues 206–218 the composition is skewed to basic and acidic residues; the sequence is REMPKQKRRKDDG. Residues 206–230 are disordered; sequence REMPKQKRRKDDGIIPPIHPSYQMT.

This sequence belongs to the IL-6 superfamily. As to quaternary structure, component of a hexamer of two molecules each of IL6, IL6R and IL6ST; first binds to IL6R to associate with the signaling subunit IL6ST. In terms of tissue distribution, expressed in kidney and spleen. Low expression in liver and gills.

It is found in the secreted. Functionally, cytokine with a wide variety of biological functions in immunity, tissue regeneration, and metabolism. Binds to IL6R, then the complex associates to the signaling subunit IL6ST/gp130 to trigger the intracellular IL6-signaling pathway. The interaction with the membrane-bound IL6R and IL6ST stimulates 'classic signaling', whereas the binding of IL6 and soluble IL6R to IL6ST stimulates 'trans-signaling'. Alternatively, 'cluster signaling' occurs when membrane-bound IL6:IL6R complexes on transmitter cells activate IL6ST receptors on neighboring receiver cells. The protein is Interleukin-6 (il6) of Paralichthys olivaceus (Bastard halibut).